Consider the following 1192-residue polypeptide: ATP-dependent helicase/deoxyribonuclease subunit B (1192 aa).

This sequence belongs to the helicase family. AddB/RexB type 2 subfamily. As to quaternary structure, heterodimer of AddA and RexB. It depends on Mg(2+) as a cofactor.

Its function is as follows. The heterodimer acts as both an ATP-dependent DNA helicase and an ATP-dependent, dual-direction single-stranded exonuclease. Recognizes the chi site generating a DNA molecule suitable for the initiation of homologous recombination. This subunit has 5' -&gt; 3' nuclease activity but not helicase activity. The protein is ATP-dependent helicase/deoxyribonuclease subunit B of Pediococcus pentosaceus (strain ATCC 25745 / CCUG 21536 / LMG 10740 / 183-1w).